A 295-amino-acid polypeptide reads, in one-letter code: Protoheme IX farnesyltransferase (295 aa).

9 helical membrane-spanning segments follow: residues 27-47 (LVVFTAIAGMVAAPGSIHPFL), 48-68 (ALISLMCIALGSGSAGAINMW), 94-114 (SALEFGITIGILSVFIMAIAV), 117-137 (ISAALLAVSILFYVFVYTIWL), 144-164 (NIVIGGAAGAFPPMIGWAVVT), 171-191 (SFILFLIIFMWTPPHFWALSL), 216-236 (KHILIYSILLVLTSLLPALFL), 241-261 (FYLSMAIIEGCVFIWFAISVI), and 272-292 (MFSYSISYLFSLFASIIFCSI).

The protein belongs to the UbiA prenyltransferase family. Protoheme IX farnesyltransferase subfamily.

It is found in the cell membrane. The catalysed reaction is heme b + (2E,6E)-farnesyl diphosphate + H2O = Fe(II)-heme o + diphosphate. Its pathway is porphyrin-containing compound metabolism; heme O biosynthesis; heme O from protoheme: step 1/1. Converts heme B (protoheme IX) to heme O by substitution of the vinyl group on carbon 2 of heme B porphyrin ring with a hydroxyethyl farnesyl side group. This is Protoheme IX farnesyltransferase from Wolbachia pipientis subsp. Culex pipiens (strain wPip).